A 548-amino-acid chain; its full sequence is MFS-rype transporter paaT (548 aa).

Basic and acidic residues predominate over residues M1–H10. Residues M1–P32 form a disordered region. A compositionally biased stretch (polar residues) spans R21–Y30. N70 and N93 each carry an N-linked (GlcNAc...) asparagine glycan. The next 12 helical transmembrane spans lie at W100–I120, L139–M159, A174–V194, L197–L217, G224–V244, W256–V276, I332–V352, G370–V390, L411–T431, L436–Y456, A471–T493, and A505–F525. Residues Y258–W269 carry the Peroxisomal targeting signal motif.

This sequence belongs to the major facilitator superfamily. DHA1 family. Polyamines/proton antiporter (TC 2.A.1.2.16) subfamily.

It localises to the peroxisome membrane. Its function is as follows. MFS-type transporter involved in penicillin production, most likely through the translocation of side-chain precursors (phenylacetic acid and phenoxyacetic acid) from the cytosol to the peroxisomal lumen across the peroxisomal membrane. The protein is MFS-rype transporter paaT of Penicillium rubens (strain ATCC 28089 / DSM 1075 / NRRL 1951 / Wisconsin 54-1255) (Penicillium chrysogenum).